The following is a 602-amino-acid chain: Translation factor GUF1 homolog, organellar chromatophore (602 aa).

Residues 7 to 189 (SRIRNFCIIA…AIVERIPPPV (183 aa)) form the tr-type G domain. GTP is bound by residues 16–23 (AHIDHGKS), 82–86 (DTPGH), and 136–139 (NKID).

Belongs to the TRAFAC class translation factor GTPase superfamily. Classic translation factor GTPase family. LepA subfamily.

Its subcellular location is the plastid. It localises to the organellar chromatophore. The enzyme catalyses GTP + H2O = GDP + phosphate + H(+). Promotes protein synthesis. May act as a fidelity factor of the translation reaction, by catalyzing a one-codon backward translocation of tRNAs on improperly translocated ribosomes. The chain is Translation factor GUF1 homolog, organellar chromatophore from Paulinella chromatophora.